A 130-amino-acid polypeptide reads, in one-letter code: Large ribosomal subunit protein bL20c (130 aa).

This sequence belongs to the bacterial ribosomal protein bL20 family.

It localises to the plastid. It is found in the chloroplast. Functionally, binds directly to 23S ribosomal RNA and is necessary for the in vitro assembly process of the 50S ribosomal subunit. It is not involved in the protein synthesizing functions of that subunit. The polypeptide is Large ribosomal subunit protein bL20c (Oenothera argillicola (Appalachian evening primrose)).